A 105-amino-acid polypeptide reads, in one-letter code: U-scoloptoxin(05)-Sa2a (105 aa).

Positions 1–24 (MKEAVKMSCLCIFLFLFLFSLTDA) are cleaved as a signal peptide. Positions 79-105 (HVPESNQKDGKVSTHMSSCNTDGCNAN) are disordered. Residues 92-105 (THMSSCNTDGCNAN) show a composition bias toward polar residues.

The protein belongs to the scoloptoxin-05 family. Post-translationally, contains 4 disulfide bonds. In terms of tissue distribution, expressed by the venom gland.

The protein resides in the secreted. This is U-scoloptoxin(05)-Sa2a from Scolopendra alternans (Florida Keys giant centipede).